Consider the following 163-residue polypeptide: Lipoprotein signal peptidase (163 aa).

The next 3 helical transmembrane spans lie at 11–31 (ILIA…IATT), 63–83 (KMTF…YFFI), and 88–108 (YNLF…GNFI). Residues aspartate 118 and aspartate 136 contribute to the active site. A helical membrane pass occupies residues 131 to 151 (IFNIADSSLTIGVILIIIALL).

It belongs to the peptidase A8 family.

It is found in the cell membrane. It catalyses the reaction Release of signal peptides from bacterial membrane prolipoproteins. Hydrolyzes -Xaa-Yaa-Zaa-|-(S,diacylglyceryl)Cys-, in which Xaa is hydrophobic (preferably Leu), and Yaa (Ala or Ser) and Zaa (Gly or Ala) have small, neutral side chains.. It functions in the pathway protein modification; lipoprotein biosynthesis (signal peptide cleavage). This protein specifically catalyzes the removal of signal peptides from prolipoproteins. The polypeptide is Lipoprotein signal peptidase (Staphylococcus aureus (strain MRSA252)).